A 207-amino-acid chain; its full sequence is Small ribosomal subunit protein bS6c (207 aa).

A chloroplast-targeting transit peptide spans 1-59; sequence MASSLCVSNSTICPLPNVSSQPLLSFSHSLRPFISKSKPMCASIQKRDGSQFVVKSQAL. A disordered region spans residues 69 to 99; that stretch reads GFGSDDDPTSPSGSGVSTALEDKPEPQCPPG. The span at 77–86 shows a compositional bias: low complexity; sequence TSPSGSGVST.

It belongs to the bacterial ribosomal protein bS6 family. As to quaternary structure, part of the 30S ribosomal subunit.

Its subcellular location is the plastid. It is found in the chloroplast. Functionally, binds together with bS18 to 16S ribosomal RNA. In Arabidopsis thaliana (Mouse-ear cress), this protein is Small ribosomal subunit protein bS6c (RPS6).